Reading from the N-terminus, the 299-residue chain is Putative beta-glucosidase 2 (299 aa).

Positions 1–16 are cleaved as a signal peptide; that stretch reads MLHCITTIFLSISRMT. 49 to 50 contacts a beta-D-glucoside; sequence NE. Glu-50 (proton donor) is an active-site residue. Cysteines 69 and 72 form a disulfide. Residues Asn-71 and Asn-76 are each glycosylated (N-linked (GlcNAc...) asparagine). Position 189 (Tyr-189) interacts with a beta-D-glucoside. Asn-222 is a glycosylation site (N-linked (GlcNAc...) asparagine). Glu-255 provides a ligand contact to a beta-D-glucoside. The active-site Nucleophile is Glu-255. N-linked (GlcNAc...) asparagine glycosylation is present at Asn-290.

It belongs to the glycosyl hydrolase 1 family.

The catalysed reaction is Hydrolysis of terminal, non-reducing beta-D-glucosyl residues with release of beta-D-glucose.. This is Putative beta-glucosidase 2 from Arabidopsis thaliana (Mouse-ear cress).